The primary structure comprises 350 residues: 3-dehydroquinate synthase (350 aa).

Residues 106–110 (GVVGD), 130–131 (TS), K143, and K152 contribute to the NAD(+) site. Residues E185, H246, and H263 each contribute to the Zn(2+) site.

It belongs to the sugar phosphate cyclases superfamily. Dehydroquinate synthase family. Requires Co(2+) as cofactor. Zn(2+) serves as cofactor. The cofactor is NAD(+).

The protein resides in the cytoplasm. The enzyme catalyses 7-phospho-2-dehydro-3-deoxy-D-arabino-heptonate = 3-dehydroquinate + phosphate. Its pathway is metabolic intermediate biosynthesis; chorismate biosynthesis; chorismate from D-erythrose 4-phosphate and phosphoenolpyruvate: step 2/7. Its function is as follows. Catalyzes the conversion of 3-deoxy-D-arabino-heptulosonate 7-phosphate (DAHP) to dehydroquinate (DHQ). This chain is 3-dehydroquinate synthase, found in Clostridium perfringens (strain SM101 / Type A).